The following is an 818-amino-acid chain: Protein Cep78 homolog (818 aa).

3 disordered regions span residues 513-589, 691-748, and 768-798; these read LDVE…HEFA, RQAN…TEAT, and KQSE…DQNV. Residues 514–539 are compositionally biased toward acidic residues; sequence DVEEEEEEEEEEQQAEESQSESEPQN. Basic and acidic residues predominate over residues 561-589; it reads VRSEIKYVENNPKEAAKKNRESKSDHEFA. Residues 782–792 show a composition bias toward gly residues; sequence GDAGGGGGSGD.

It belongs to the CEP78 family.

The protein resides in the cytoplasm. It localises to the cytoskeleton. The protein localises to the microtubule organizing center. Its subcellular location is the centrosome. It is found in the centriole. The protein resides in the cilium basal body. In terms of biological role, may play a role in cilium biogenesis. The sequence is that of Protein Cep78 homolog from Drosophila melanogaster (Fruit fly).